A 136-amino-acid polypeptide reads, in one-letter code: Small ribosomal subunit protein uS9 (136 aa).

The interval 111-136 (TRDPRMKERKKTGQPGARKRFQFSKR) is disordered. Over residues 117–136 (KERKKTGQPGARKRFQFSKR) the composition is skewed to basic residues.

This sequence belongs to the universal ribosomal protein uS9 family.

This Methylacidiphilum infernorum (isolate V4) (Methylokorus infernorum (strain V4)) protein is Small ribosomal subunit protein uS9.